The chain runs to 524 residues: Strychnine-10-hydroxylase (524 aa).

The helical transmembrane segment at 6–26 (LYIHTAILGLISLFLILHFVF) threads the bilayer. Cys466 is a heme binding site.

This sequence belongs to the cytochrome P450 family. Requires heme as cofactor.

The protein resides in the membrane. It carries out the reaction strychnine + reduced [NADPH--hemoprotein reductase] + O2 = 10-hydroxystrychnine + oxidized [NADPH--hemoprotein reductase] + H2O + H(+). It participates in alkaloid biosynthesis. In terms of biological role, monooxygenase involved in the biosynthesis of curare monoterpene indole alkaloids (MIAs), natural products such as strychnine, a neurotoxic compound used as a pesticide to control rodents, and its pharmacologically active derivatives, including brucine, used to regulate blood pressure. Curare alkaloids act as animal glycine receptor antagonists. Catalyzes the conversion of strychnine to 10-OH strychnine. The protein is Strychnine-10-hydroxylase of Strychnos nux-vomica (Poison nut).